The chain runs to 145 residues: Putative pre-16S rRNA nuclease (145 aa).

Belongs to the YqgF nuclease family.

It localises to the cytoplasm. Could be a nuclease involved in processing of the 5'-end of pre-16S rRNA. The polypeptide is Putative pre-16S rRNA nuclease (Pseudomonas fluorescens (strain SBW25)).